Consider the following 242-residue polypeptide: Small ribosomal subunit protein uS2 (242 aa).

The protein belongs to the universal ribosomal protein uS2 family.

The sequence is that of Small ribosomal subunit protein uS2 from Mannheimia succiniciproducens (strain KCTC 0769BP / MBEL55E).